A 555-amino-acid polypeptide reads, in one-letter code: Potassium-transporting ATPase potassium-binding subunit (555 aa).

The next 10 membrane-spanning stretches (helical) occupy residues 2–22 (IWVAVVITMLLFILVAKPTGI), 60–80 (QYALSLVLLNGFMIVVVYFIF), 130–150 (IGITFLMFAAPATTLALVMAF), 173–193 (VFLPIAFMAALVFVALGVPQT), 246–266 (MSNILQMMLMMLLPTALPFTY), 278–298 (ILFVSLFMVFLLGFITITTSE), 374–394 (AGFVNIIMYAIIAVFISGLMV), 412–432 (LIAVTILFHPLLILGFSALAL), 483–503 (LVMFLGRYFSLITMLAVAASL), and 525–545 (GIFIGTIVIVGALTFFPMLVL).

Belongs to the KdpA family. In terms of assembly, the system is composed of three essential subunits: KdpA, KdpB and KdpC.

The protein localises to the cell membrane. Functionally, part of the high-affinity ATP-driven potassium transport (or Kdp) system, which catalyzes the hydrolysis of ATP coupled with the electrogenic transport of potassium into the cytoplasm. This subunit binds the extracellular potassium ions and delivers the ions to the membrane domain of KdpB through an intramembrane tunnel. The chain is Potassium-transporting ATPase potassium-binding subunit from Bacillus anthracis (strain A0248).